We begin with the raw amino-acid sequence, 68 residues long: Phage-like element PBSX protein XtrA (68 aa).

The protein to B.subtilis YqaO.

The sequence is that of Phage-like element PBSX protein XtrA (xtrA) from Bacillus subtilis (strain 168).